The following is a 495-amino-acid chain: Serine/threonine-protein kinase F (495 aa).

The 269-residue stretch at 46–314 folds into the Protein kinase domain; it reads YLPVKLLGQG…ASAEEVLAVL (269 aa). Residues 52 to 60 and Lys-77 contribute to the ATP site; that span reads LGQGGFGAA. Asp-187 functions as the Proton acceptor in the catalytic mechanism. Positions 316-354 are disordered; sequence GGKGNQGKAPPGATVSTPQGTNTQIQPTPASSASPLTAP. The span at 329-350 shows a compositional bias: polar residues; it reads TVSTPQGTNTQIQPTPASSASP.

It belongs to the protein kinase superfamily. Ser/Thr protein kinase family.

It catalyses the reaction L-seryl-[protein] + ATP = O-phospho-L-seryl-[protein] + ADP + H(+). The catalysed reaction is L-threonyl-[protein] + ATP = O-phospho-L-threonyl-[protein] + ADP + H(+). This chain is Serine/threonine-protein kinase F (spkF), found in Synechocystis sp. (strain ATCC 27184 / PCC 6803 / Kazusa).